The primary structure comprises 880 residues: Interference hedgehog (880 aa).

Residues 1–20 (MPSIVSSLLLVVLLTSPLGA) form the signal peptide. At 21 to 703 (IPVLYPSPPP…SHNETFSMSP (683 aa)) the chain is on the extracellular side. 4 Ig-like C2-type domains span residues 37–142 (PGVR…TARL), 154–235 (PVTS…STSS), 251–339 (PYLL…FIQV), and 345–432 (PQIV…LQVT). 4 disulfide bridges follow: C60–C126, C172–C219, C275–C323, and C366–C414. Residues N79, N102, and N208 are each glycosylated (N-linked (GlcNAc...) asparagine). The disordered stretch occupies residues 435–468 (PIHSESTQQSDHNHSKANRGRRPAQMIPPSAPNV). 2 N-linked (GlcNAc...) asparagine glycosylation sites follow: N447 and N467. Fibronectin type-III domains follow at residues 462 to 570 (PPSA…LQPG) and 578 to 673 (VPEM…TQRP). Heparin-binding residues include R498, K504, K506, and R544. N-linked (GlcNAc...) asparagine glycosylation occurs at N560. The segment at 665–699 (LKQGRTQRPMVSTTEEATLQTGVRDTTTPSHNETF) is disordered. A compositionally biased stretch (polar residues) spans 668 to 699 (GRTQRPMVSTTEEATLQTGVRDTTTPSHNETF). N696 carries N-linked (GlcNAc...) asparagine glycosylation. A helical transmembrane segment spans residues 704-724 (IVTGTIGGGAVLILFVVTTCL). Topologically, residues 725–880 (CMWRRRNSRA…SSGSLNSVGV (156 aa)) are cytoplasmic. A disordered region spans residues 797–880 (YFQRQPTYDY…SSGSLNSVGV (84 aa)). 2 stretches are compositionally biased toward low complexity: residues 827 to 839 (RAGS…NNLN) and 864 to 880 (SSRS…SVGV).

The protein belongs to the immunoglobulin superfamily. IHOG family. Homodimer. Heterotetramer; 2 iHog chains bind 2 hh chains when facilitated by heparin, heparin is required to promote high-affinity interactions between hh and iHog.

Its subcellular location is the membrane. In terms of biological role, mediates response to the active Hedgehog (Hh) protein signal in embryos, functioning upstream or at the level of patched (ptc). The chain is Interference hedgehog from Drosophila ananassae (Fruit fly).